Consider the following 1028-residue polypeptide: Protein SMAX1-LIKE 5 (1028 aa).

A Clp R domain is found at 8 to 199 (IQQTLTTEAA…CVEDCSVSSV (192 aa)). Repeat regions lie at residues 12–102 (LTTE…LNRL) and 116–199 (LANA…VSSV). Positions 871–875 (LDLNI) match the EAR motif.

The protein belongs to the ClpA/ClpB family. In terms of assembly, interacts probably with TPL/TPR in an EAR-motif dependent manner. Detected in roots, seedlings and axillary branches.

In terms of biological role, may function in a transcriptional corepressor complex. The polypeptide is Protein SMAX1-LIKE 5 (Arabidopsis thaliana (Mouse-ear cress)).